Consider the following 266-residue polypeptide: Transcription factor BIP1 (266 aa).

A disordered region spans residues 1–73 (MAMYMPSTAS…DREAQRAIRA (73 aa)). Polar residues-rich tracts occupy residues 7 to 22 (STAS…SGTP) and 47 to 56 (RSVSTLTPSQ). A bZIP domain is found at 54–95 (PSQLARKRANDREAQRAIRARTKEHIERLEREVEELKSKQNR). A basic motif region spans residues 59-81 (RKRANDREAQRAIRARTKEHIER). The span at 61 to 73 (RANDREAQRAIRA) shows a compositional bias: basic and acidic residues. Residues 82–89 (LEREVEEL) are leucine-zipper.

This sequence belongs to the bZIP family. As to expression, expressed in appressoria.

It is found in the nucleus. Its function is as follows. Transcription factor that is required for infection of plants hosts. Is not implicated in the development of appressoria or the subsequent penetration of host leaves, but is necessary for the initial establishment of the fungus within plant cells by orchestrating the expression of a unique set of early invasion-related genes within appressoria, encoding secreted effectors, enzymes, secondary metabolism-related enzymes, and signaling membrane receptors. Controls the expression of targeted genes by interacting directly with a 5'-TGACTC-3' motif present in their promoters. In Pyricularia oryzae (strain 70-15 / ATCC MYA-4617 / FGSC 8958) (Rice blast fungus), this protein is Transcription factor BIP1.